The chain runs to 259 residues: Phosphatidylglycerol--prolipoprotein diacylglyceryl transferase (259 aa).

4 helical membrane passes run 9 to 29 (IIFSIGPFSISWYSLSYVVGI), 55 to 75 (FITYAIIGIIVGGRLGYVLLY), 92 to 112 (EGGMSFHGATIGIIISAYLFC), and 117 to 137 (INFLSLTDIITTVVPIGLFLG). Arg-138 lines the a 1,2-diacyl-sn-glycero-3-phospho-(1'-sn-glycerol) pocket. 3 consecutive transmembrane segments (helical) span residues 172 to 192 (QLYEAFFEGLILFCILAYAVF), 201 to 221 (GLNSGIYLIFYSLFRIIIEMF), and 228 to 248 (IGFILDSLTMGQILSAPMLLL).

This sequence belongs to the Lgt family.

The protein localises to the cell inner membrane. The enzyme catalyses L-cysteinyl-[prolipoprotein] + a 1,2-diacyl-sn-glycero-3-phospho-(1'-sn-glycerol) = an S-1,2-diacyl-sn-glyceryl-L-cysteinyl-[prolipoprotein] + sn-glycerol 1-phosphate + H(+). The protein operates within protein modification; lipoprotein biosynthesis (diacylglyceryl transfer). Catalyzes the transfer of the diacylglyceryl group from phosphatidylglycerol to the sulfhydryl group of the N-terminal cysteine of a prolipoprotein, the first step in the formation of mature lipoproteins. This is Phosphatidylglycerol--prolipoprotein diacylglyceryl transferase from Rickettsia typhi (strain ATCC VR-144 / Wilmington).